The following is a 424-amino-acid chain: Glutamyl-tRNA reductase (424 aa).

Substrate-binding positions include 53–56, serine 111, 116–118, and glutamine 122; these read TCNR and EPQ. The active-site Nucleophile is cysteine 54. NADP(+) is bound at residue 191-196; sequence GAGEMI.

Belongs to the glutamyl-tRNA reductase family. Homodimer.

The catalysed reaction is (S)-4-amino-5-oxopentanoate + tRNA(Glu) + NADP(+) = L-glutamyl-tRNA(Glu) + NADPH + H(+). It functions in the pathway porphyrin-containing compound metabolism; protoporphyrin-IX biosynthesis; 5-aminolevulinate from L-glutamyl-tRNA(Glu): step 1/2. In terms of biological role, catalyzes the NADPH-dependent reduction of glutamyl-tRNA(Glu) to glutamate 1-semialdehyde (GSA). This chain is Glutamyl-tRNA reductase, found in Bordetella bronchiseptica (strain ATCC BAA-588 / NCTC 13252 / RB50) (Alcaligenes bronchisepticus).